An 83-amino-acid chain; its full sequence is Small ribosomal subunit protein bS16 (83 aa).

The protein belongs to the bacterial ribosomal protein bS16 family.

The sequence is that of Small ribosomal subunit protein bS16 from Pseudomonas fluorescens (strain SBW25).